A 250-amino-acid chain; its full sequence is Cruxrhodopsin-1 (250 aa).

At 1–9 (MPEPGSEAI) the chain is on the extracellular side. The chain crosses the membrane as a helical span at residues 10–27 (WLWLGTAGMFLGMLYFIA). Topologically, residues 28 to 41 (RGWGETDSRRQKFY) are cytoplasmic. A helical membrane pass occupies residues 42 to 60 (IATILITAIAFVNYLAMAL). At 61-77 (GFGLTIVEFAGEEHPIY) the chain is on the extracellular side. Residues 78–94 (WARYSDWLFTTPLLLYD) traverse the membrane as a helical segment. At 95 to 105 (LGLLAGADRNT) the chain is on the cytoplasmic side. A helical membrane pass occupies residues 106–125 (ITSLVSLDVLMIGTGLVATL). Residues 126 to 138 (SPGSGVLSAGAER) lie on the Extracellular side of the membrane. The chain crosses the membrane as a helical span at residues 139 to 158 (LVWWGISTAFLLVLLYFLFS). Over 159 to 176 (SLSGRVADLPSDTRSTFK) the chain is Cytoplasmic. Residues 177–195 (TLRNLVTVVWLVYPVWWLI) form a helical membrane-spanning segment. Residues 196–207 (GTEGIGLVGIGI) are Extracellular-facing. A helical membrane pass occupies residues 208-227 (ETAGFMVIDLTAKVGFGIIL). An N6-(retinylidene)lysine modification is found at Lys220. The Cytoplasmic segment spans residues 228–250 (LRSHGVLDGAAETTGTGATPADD).

This sequence belongs to the archaeal/bacterial/fungal opsin family. As to quaternary structure, homotrimer.

It localises to the cell membrane. In terms of biological role, light-driven proton pump. This is Cruxrhodopsin-1 (cop1) from Haloarcula argentinensis.